The sequence spans 204 residues: N-(5'-phosphoribosyl)anthranilate isomerase (204 aa).

Belongs to the TrpF family.

It carries out the reaction N-(5-phospho-beta-D-ribosyl)anthranilate = 1-(2-carboxyphenylamino)-1-deoxy-D-ribulose 5-phosphate. The protein operates within amino-acid biosynthesis; L-tryptophan biosynthesis; L-tryptophan from chorismate: step 3/5. This is N-(5'-phosphoribosyl)anthranilate isomerase from Bacillus cereus (strain Q1).